A 389-amino-acid chain; its full sequence is Phosphopentomutase (389 aa).

Mn(2+)-binding residues include Asp-9, Asp-282, His-287, Asp-323, His-324, and His-335.

This sequence belongs to the phosphopentomutase family. Requires Mn(2+) as cofactor.

The protein localises to the cytoplasm. It catalyses the reaction 2-deoxy-alpha-D-ribose 1-phosphate = 2-deoxy-D-ribose 5-phosphate. The enzyme catalyses alpha-D-ribose 1-phosphate = D-ribose 5-phosphate. The protein operates within carbohydrate degradation; 2-deoxy-D-ribose 1-phosphate degradation; D-glyceraldehyde 3-phosphate and acetaldehyde from 2-deoxy-alpha-D-ribose 1-phosphate: step 1/2. Its function is as follows. Isomerase that catalyzes the conversion of deoxy-ribose 1-phosphate (dRib-1-P) and ribose 1-phosphate (Rib-1-P) to deoxy-ribose 5-phosphate (dRib-5-P) and ribose 5-phosphate (Rib-5-P), respectively. This Kosmotoga olearia (strain ATCC BAA-1733 / DSM 21960 / TBF 19.5.1) protein is Phosphopentomutase.